Consider the following 131-residue polypeptide: UPF0102 protein YraN (131 aa).

Polar residues predominate over residues 1-19 (MATVPTRSGSPRQLTTKQT). The tract at residues 1–20 (MATVPTRSGSPRQLTTKQTG) is disordered.

Belongs to the UPF0102 family.

The chain is UPF0102 protein YraN from Escherichia coli O157:H7.